The sequence spans 68 residues: Disintegrin EMF10B (68 aa).

The Disintegrin domain occupies 1–68 (ELLQNSGNPC…SDCPRNPVFK (68 aa)). 4 disulfide bridges follow: cysteine 10–cysteine 33, cysteine 24–cysteine 30, cysteine 29–cysteine 54, and cysteine 42–cysteine 61. Residues 46 to 48 (MGD) carry the Cell attachment site; atypical (MGD) motif.

It belongs to the venom metalloproteinase (M12B) family. P-II subfamily. P-IIe sub-subfamily. In terms of assembly, heterodimer with EMF10A; disulfide-linked. Expressed by the venom gland.

Its subcellular location is the secreted. In terms of biological role, extremely potent and selective inhibitor of integrin alpha-5/beta-1 (ITGA5/ITGB1). Partially inhibits adhesion of cells expressing alpha-IIb/beta-3 (ITGA2B/ITGB3), alpha-V/beta-3 (ITGAV/ITGB3), and alpha-4/beta-1 (ITGA4/ITGB1) to appropriate ligands only at concentration higher than 500 nM. Weakly inhibits ADP-induced platelet aggregation. The sequence is that of Disintegrin EMF10B from Eristicophis macmahoni (Leaf-nosed viper).